The chain runs to 127 residues: Snaclec macrovipecetin subunit beta (127 aa).

3 disulfide bridges follow: Cys4–Cys15, Cys32–Cys121, and Cys98–Cys113. Residues Tyr11 to Lys122 enclose the C-type lectin domain.

Heterodimer of subunits alpha and beta; disulfide-linked. As to expression, expressed by the venom gland.

It localises to the secreted. Its function is as follows. Interferes with one step of hemostasis (modulation of platelet aggregation, or coagulation cascade, for example). In Macrovipera lebetinus (Levantine viper), this protein is Snaclec macrovipecetin subunit beta.